The sequence spans 194 residues: Adapter protein MecA 2 (194 aa).

The protein belongs to the MecA family. In terms of assembly, homodimer.

In terms of biological role, enables the recognition and targeting of unfolded and aggregated proteins to the ClpC protease or to other proteins involved in proteolysis. Also involved in Spx degradation by ClpC. Acts negatively in the development of competence by binding ComK and recruiting it to the ClpCP protease. When overexpressed, inhibits sporulation. This Bacillus subtilis (strain 168) protein is Adapter protein MecA 2 (mecB).